The following is a 419-amino-acid chain: Tryptophan synthase beta chain (419 aa).

Lys-113 carries the N6-(pyridoxal phosphate)lysine modification.

The protein belongs to the TrpB family. Tetramer of two alpha and two beta chains. Requires pyridoxal 5'-phosphate as cofactor.

It carries out the reaction (1S,2R)-1-C-(indol-3-yl)glycerol 3-phosphate + L-serine = D-glyceraldehyde 3-phosphate + L-tryptophan + H2O. It functions in the pathway amino-acid biosynthesis; L-tryptophan biosynthesis; L-tryptophan from chorismate: step 5/5. Functionally, the beta subunit is responsible for the synthesis of L-tryptophan from indole and L-serine. This is Tryptophan synthase beta chain from Picrophilus torridus (strain ATCC 700027 / DSM 9790 / JCM 10055 / NBRC 100828 / KAW 2/3).